The primary structure comprises 461 residues: Homocitrate synthase (461 aa).

The Pyruvate carboxyltransferase domain maps to 4–259 (VGILDSTLRE…IEVVKLDKLQ (256 aa)). Arginine 12 provides a ligand contact to 2-oxoglutarate. Glutamate 13 is a binding site for Mg(2+). 2-oxoglutarate-binding residues include histidine 76, arginine 136, and threonine 170. Mg(2+)-binding residues include histidine 198 and histidine 200. Histidine 292 serves as the catalytic Proton acceptor.

This sequence belongs to the alpha-IPM synthase/homocitrate synthase family. Homocitrate synthase LYS20/LYS21 subfamily. Mg(2+) serves as cofactor. It depends on Mn(2+) as a cofactor.

The enzyme catalyses acetyl-CoA + 2-oxoglutarate + H2O = (2R)-homocitrate + CoA + H(+). Its pathway is amino-acid biosynthesis; L-lysine biosynthesis via AAA pathway; L-alpha-aminoadipate from 2-oxoglutarate: step 1/5. Its function is as follows. Catalyzes the aldol-type condensation of 2-oxoglutarate with acetyl-CoA to yield homocitrate. Carries out the first step of the alpha-aminoadipate (AAA) lysine biosynthesis pathway. The sequence is that of Homocitrate synthase from Saccharolobus islandicus (strain L.S.2.15 / Lassen #1) (Sulfolobus islandicus).